The chain runs to 117 residues: Large ribosomal subunit protein uL24 (117 aa).

Over residues 1-12 the composition is skewed to polar residues; the sequence is MSKKNSQTSPQR. The tract at residues 1 to 20 is disordered; the sequence is MSKKNSQTSPQRQKMHVKKG.

The protein belongs to the universal ribosomal protein uL24 family. In terms of assembly, part of the 50S ribosomal subunit.

Its function is as follows. One of two assembly initiator proteins, it binds directly to the 5'-end of the 23S rRNA, where it nucleates assembly of the 50S subunit. In terms of biological role, one of the proteins that surrounds the polypeptide exit tunnel on the outside of the subunit. This is Large ribosomal subunit protein uL24 from Microcystis aeruginosa (strain NIES-843 / IAM M-2473).